The following is a 354-amino-acid chain: NADH-quinone oxidoreductase subunit H (354 aa).

8 helical membrane-spanning segments follow: residues 25 to 45 (LVRI…LILW), 91 to 111 (WIYL…WAVI), 126 to 146 (LLYA…AGWA), 170 to 190 (MGFA…SGIV), 205 to 225 (FLSW…ISGI), 267 to 287 (IVIS…PFGF), 290 to 310 (FVPG…VFIW), and 330 to 350 (IFIP…MSPL).

The protein belongs to the complex I subunit 1 family. As to quaternary structure, NDH-1 is composed of 14 different subunits. Subunits NuoA, H, J, K, L, M, N constitute the membrane sector of the complex.

The protein resides in the cell inner membrane. It catalyses the reaction a quinone + NADH + 5 H(+)(in) = a quinol + NAD(+) + 4 H(+)(out). NDH-1 shuttles electrons from NADH, via FMN and iron-sulfur (Fe-S) centers, to quinones in the respiratory chain. The immediate electron acceptor for the enzyme in this species is believed to be ubiquinone. Couples the redox reaction to proton translocation (for every two electrons transferred, four hydrogen ions are translocated across the cytoplasmic membrane), and thus conserves the redox energy in a proton gradient. This subunit may bind ubiquinone. This chain is NADH-quinone oxidoreductase subunit H, found in Paraburkholderia phytofirmans (strain DSM 17436 / LMG 22146 / PsJN) (Burkholderia phytofirmans).